Reading from the N-terminus, the 724-residue chain is NAD(+) hydrolase SARM1 (724 aa).

The transit peptide at 1-27 (MVLTLLFSAYKLCRFFIMSGPRPGADR) directs the protein to the mitochondrion. The ARM 1 repeat unit spans residues 60 to 100 (EVQGALERSLPELQQALSELKQASAAQAVGAGLAEVFQLVE). Residues Trp-103, Arg-110, 149–157 (EQILVAENR), and 190–193 (HMFK) each bind NAD(+). 7 ARM repeats span residues 114-153 (QGLC…QILV), 155-193 (ENRD…HMFK), 196-235 (EETC…NCAL), 237-280 (GGQT…LATN), 281-314 (KEVE…CLVD), 315-354 (ASDT…AEAA), and 359-402 (QGKT…EEVP). SAM domains lie at 412-476 (WKEA…LKTF) and 486-548 (NLAD…MLHS). 2 positions are modified to phosphoserine: Ser-548 and Ser-558. A TIR domain is found at 560–703 (DTPDVFISYR…KIIRFLQGRP (144 aa)). Residues 569–570 (RR) and Glu-599 contribute to the NAD(+) site. Glu-642 is an active-site residue. Positions 703–717 (PSQDSSAGSDTSLEG) are enriched in polar residues. The interval 703–724 (PSQDSSAGSDTSLEGATSMGLP) is disordered.

This sequence belongs to the SARM1 family. As to quaternary structure, homooctamer; forms an octameric ring via SAM domains. Interacts with TICAM1/TRIF and thereby interferes with TICAM1/TRIF function. Interacts with MAPK10/JNK3 and SDC2 (via cytoplasmic domain). Phosphorylation at Ser-548 by JNK kinases (MAPK8, MAPK9 and /or MAPK10) enhance the NAD(+) hydrolase (NADase) activity. Phosphorylation at Ser-548 and subsequent activation takes place in response to oxidative stress conditions and inhibits mitochondrial respiration. Phosphorylation at Ser-548 increases in response to cerebral ischemia/reperfusion (I/R) injury.

It is found in the cytoplasm. Its subcellular location is the cell projection. It localises to the axon. The protein localises to the dendrite. The protein resides in the synapse. It is found in the mitochondrion. It catalyses the reaction NAD(+) + H2O = ADP-D-ribose + nicotinamide + H(+). The catalysed reaction is NAD(+) = cyclic ADP-beta-D-ribose + nicotinamide + H(+). It carries out the reaction NADP(+) + H2O = ADP-D-ribose 2'-phosphate + nicotinamide + H(+). Its activity is regulated as follows. Autoinhibited: in the inactive state, the enzymatic TIR domain is held apart by the autoinhibiting ARM repeats. NAD(+)-binding to ARM repeats maintains an inactive state by promoting interaction between ARM repeats and the TIR domain, thereby facilitating inhibition of the enzymatic TIR domain. Following activation, possibly by nicotinamide mononucleotide (NMN), auto-inhibitory interactions are released, allowing self-association of the TIR domains and subsequent activation of the NAD(+) hydrolase (NADase) activity. Self-association of TIR domains is facilitated by the octamer of SAM domains. Its function is as follows. NAD(+) hydrolase, which plays a key role in axonal degeneration following injury by regulating NAD(+) metabolism. Acts as a negative regulator of MYD88- and TRIF-dependent toll-like receptor signaling pathway by promoting Wallerian degeneration, an injury-induced form of programmed subcellular death which involves degeneration of an axon distal to the injury site. Wallerian degeneration is triggered by NAD(+) depletion: in response to injury, SARM1 is activated and catalyzes cleavage of NAD(+) into ADP-D-ribose (ADPR), cyclic ADPR (cADPR) and nicotinamide; NAD(+) cleavage promoting cytoskeletal degradation and axon destruction. Also able to hydrolyze NADP(+), but not other NAD(+)-related molecules. Can activate neuronal cell death in response to stress. Regulates dendritic arborization through the MAPK4-JNK pathway. Involved in innate immune response: inhibits both TICAM1/TRIF- and MYD88-dependent activation of JUN/AP-1, TRIF-dependent activation of NF-kappa-B and IRF3, and the phosphorylation of MAPK14/p38. In Rattus norvegicus (Rat), this protein is NAD(+) hydrolase SARM1.